A 395-amino-acid polypeptide reads, in one-letter code: MGIKHLYQIIQENAPDAVKAGEIKNHFGRKVAIDASMSIYSFLIAVRSDGQQLTSETGETTSHLMGMFYRTLRIVDNGIKPVYVFDGAPPKLKSGELAKRFMRKSEAAEAHEEAKEVGTAEEVEKFSRRTVRVTREHNEECKKLLKLMGVPYIDAPTEAEAQCAVLARAGKVYAAASEDMDTLCFDSPILLRHLTFSEQRKEPILEIHLDRVLEGLDMDRKQFVDLCILLGCDYLDPIPKVGPNTALKLIRDHGSLEQVVEAIKSDPKKKYTIPEDWPYKEARELFFDPDVRNADHPDCDFKWEAPDVEGLVKFLVEEKAFSEDRVRNAAARLQKNLKTAQQSRLEGFFKPIAKTEQEKAVLKRKHEEKLELQKKKKKEDSKAKKEAKSKPRGTT.

An N-domain region spans residues 1–104; it reads MGIKHLYQII…GELAKRFMRK (104 aa). Mg(2+) is bound at residue aspartate 34. Arginine 47 and arginine 70 together coordinate DNA. The Mg(2+) site is built by aspartate 86, glutamate 158, glutamate 160, aspartate 179, and aspartate 181. Positions 122-253 are I-domain; it reads EVEKFSRRTV…NTALKLIRDH (132 aa). Residue glutamate 158 coordinates DNA. Residues glycine 231 and aspartate 233 each coordinate DNA. Aspartate 233 serves as a coordination point for Mg(2+). Residues 341 to 349 are interaction with PCNA; the sequence is QQSRLEGFF. Residues 360 to 389 show a composition bias toward basic and acidic residues; it reads AVLKRKHEEKLELQKKKKKEDSKAKKEAKS. The tract at residues 360 to 395 is disordered; it reads AVLKRKHEEKLELQKKKKKEDSKAKKEAKSKPRGTT.

The protein belongs to the XPG/RAD2 endonuclease family. FEN1 subfamily. As to quaternary structure, interacts with PCNA. Three molecules of FEN1 bind to one PCNA trimer with each molecule binding to one PCNA monomer. PCNA stimulates the nuclease activity without altering cleavage specificity. Requires Mg(2+) as cofactor. Phosphorylated. Phosphorylation upon DNA damage induces relocalization to the nuclear plasma.

It is found in the nucleus. Its subcellular location is the nucleolus. The protein resides in the nucleoplasm. It localises to the mitochondrion. In terms of biological role, structure-specific nuclease with 5'-flap endonuclease and 5'-3' exonuclease activities involved in DNA replication and repair. During DNA replication, cleaves the 5'-overhanging flap structure that is generated by displacement synthesis when DNA polymerase encounters the 5'-end of a downstream Okazaki fragment. It enters the flap from the 5'-end and then tracks to cleave the flap base, leaving a nick for ligation. Also involved in the long patch base excision repair (LP-BER) pathway, by cleaving within the apurinic/apyrimidinic (AP) site-terminated flap. Acts as a genome stabilization factor that prevents flaps from equilibrating into structures that lead to duplications and deletions. Also possesses 5'-3' exonuclease activity on nicked or gapped double-stranded DNA, and exhibits RNase H activity. Also involved in replication and repair of rDNA and in repairing mitochondrial DNA. The polypeptide is Flap endonuclease 1 (Ajellomyces capsulatus (strain H143) (Darling's disease fungus)).